Consider the following 89-residue polypeptide: Small ribosomal subunit protein uS15 (89 aa).

Residues methionine 1–alanine 25 are disordered. The span at lysine 8–alanine 25 shows a compositional bias: polar residues.

It belongs to the universal ribosomal protein uS15 family. As to quaternary structure, part of the 30S ribosomal subunit. Forms a bridge to the 50S subunit in the 70S ribosome, contacting the 23S rRNA.

One of the primary rRNA binding proteins, it binds directly to 16S rRNA where it helps nucleate assembly of the platform of the 30S subunit by binding and bridging several RNA helices of the 16S rRNA. In terms of biological role, forms an intersubunit bridge (bridge B4) with the 23S rRNA of the 50S subunit in the ribosome. The protein is Small ribosomal subunit protein uS15 of Synechococcus sp. (strain CC9605).